The following is a 336-amino-acid chain: Dihydroorotate dehydrogenase (quinone) (336 aa).

Residues 62-66 (AGLDK) and threonine 86 each bind FMN. Substrate is bound at residue lysine 66. 111–115 (NRMGF) provides a ligand contact to substrate. The FMN site is built by asparagine 139 and asparagine 172. Residue asparagine 172 participates in substrate binding. Serine 175 serves as the catalytic Nucleophile. Position 177 (asparagine 177) interacts with substrate. Lysine 217 and threonine 245 together coordinate FMN. 246 to 247 (NT) provides a ligand contact to substrate. FMN-binding positions include glycine 268, glycine 297, and 318-319 (YS).

The protein belongs to the dihydroorotate dehydrogenase family. Type 2 subfamily. Monomer. FMN serves as cofactor.

It is found in the cell membrane. It catalyses the reaction (S)-dihydroorotate + a quinone = orotate + a quinol. It participates in pyrimidine metabolism; UMP biosynthesis via de novo pathway; orotate from (S)-dihydroorotate (quinone route): step 1/1. Catalyzes the conversion of dihydroorotate to orotate with quinone as electron acceptor. The sequence is that of Dihydroorotate dehydrogenase (quinone) from Cronobacter sakazakii (strain ATCC BAA-894) (Enterobacter sakazakii).